The chain runs to 530 residues: Cytochrome P450 monooxygenase apf7 (530 aa).

Residues V6–Y26 form a helical membrane-spanning segment. An N-linked (GlcNAc...) asparagine glycan is attached at N85. Position 464 (C464) interacts with heme.

This sequence belongs to the cytochrome P450 family. Heme serves as cofactor.

It localises to the membrane. It functions in the pathway secondary metabolite biosynthesis. Its function is as follows. Cytochrome P450 monooxygenase; part of the gene cluster that mediates the biosynthesis of the cyclic tetrapeptide apicidin F (APF). The non-ribosomal peptide synthetase apf1 incorporates four different amino acids to produce apicidin F: L-phenylalanine, D-pipecolic acid (D-pip), N-methoxy-L-tryptophan and L-2-aminooctanedioic acid. L-Phenylalanine is the only proteinogenic amino acid directly used by apf1. The 3 other apf1 substrates are non-proteinogenic and have to be modified by other enzymes of the cluster. Lysine is converted to delta-1-pyrroline-5-carboxylate (P5C) which is reduced to L-pipecolic acid (L-pip) by apf3. L-pip is epimerized to D-pip, probably by apf1 activity, prior to incorporation. L-Tryptophan is N-oxidyzed by one of the cytochrome P450 monooxygenases (apf7 or apf8), and further methylated at the hydroxy group by the O-methyltransferase apf6 to yield N-methoxy-L-tryptophan. The synthesis of the fourth apf1 substrate is more complex. The fatty acid synthase apf5 is involved in the synthesis of the octanoic acid backbone of L-2-aminooctanedioic acid by fixing one acetyl-CoA unit and three malonyl-CoA units. Then one of the cytochrome P450 monooxygenases (apf7 or apf8) may oxidize this backbone to 2-oxooctanoic acid. The aminotransferase apf4 is predicted to catalyze the exchange of the keto group with an amino group. The next step would be the oxidation of 2-aminooctanoic acid by one of the cytochrome P450 monooxygenases (apf7 or apf8). The last step is the oxidation of 2-amino-8-hydroxyoctanoic acid to 2-aminooctanedioic acid is catalyzed by the FAD-dependent monooxygenase apf9. In Gibberella fujikuroi (strain CBS 195.34 / IMI 58289 / NRRL A-6831) (Bakanae and foot rot disease fungus), this protein is Cytochrome P450 monooxygenase apf7.